Here is a 348-residue protein sequence, read N- to C-terminus: Uroporphyrinogen decarboxylase (348 aa).

Residues 27 to 31, F46, D76, Y152, S207, and H320 contribute to the substrate site; that span reads RQAGR.

Belongs to the uroporphyrinogen decarboxylase family. As to quaternary structure, homodimer.

The protein localises to the cytoplasm. It carries out the reaction uroporphyrinogen III + 4 H(+) = coproporphyrinogen III + 4 CO2. It participates in porphyrin-containing compound metabolism; protoporphyrin-IX biosynthesis; coproporphyrinogen-III from 5-aminolevulinate: step 4/4. In terms of biological role, catalyzes the decarboxylation of four acetate groups of uroporphyrinogen-III to yield coproporphyrinogen-III. The chain is Uroporphyrinogen decarboxylase from Bacillus cereus (strain G9842).